A 621-amino-acid chain; its full sequence is Leucine aminopeptidase (621 aa).

The propeptide occupies Met1–Met73. Positions Ser129 to Gln152 are disordered. The segment covering Gly132–Gly150 has biased composition (gly residues). Positions 390, 395, and 402 each coordinate a peptide. 2 residues coordinate Zn(2+): Lys390 and Asp395. Residues Asn400–Ser417 are L13 loop. The active site involves Lys402. Residues Asp410, Met412, Asp415, Asp475, and Glu477 each coordinate Zn(2+). Residues Asp415 and Asp475 each coordinate a peptide. Residue Arg479 is part of the active site.

It belongs to the peptidase M17 family. As to quaternary structure, homohexamer composed of dimer of trimers. Both the identity and concentration of metal ions available dictate the extent to which oligomerization occurs; Mn(2+) and Co(2+) induces oligomerization, whereas Mg(2+) has no effect, and Zn(2+) causes irreversible protein aggregation in vitro. Zn(2+) serves as cofactor.

The protein localises to the cytoplasm. It carries out the reaction Release of an N-terminal amino acid, Xaa-|-Yaa-, in which Xaa is preferably Leu, but may be other amino acids including Pro although not Arg or Lys, and Yaa may be Pro. Amino acid amides and methyl esters are also readily hydrolyzed, but rates on arylamides are exceedingly low.. The catalysed reaction is L-cysteinylglycine + H2O = L-cysteine + glycine. With respect to regulation, oligomerization is required for catalytic activity and is metal-dependent. The type of metal that binds the 2 metal binding sites influences catalytic activity and substrate specificity. In vitro, activated by Co(2+), Mn(2+), Ni(2+), Mg(2+) and Zn(2+) with decreasing strength. Occupancy of the site 2 is essential and sufficient for activating the enzyme but occupation of the 2 sites is necessary for full catalytic activity. Inhibited by Ca(2+). Inhibited by fungal metabolite bestatin. Aminopeptidase which preferentially cleaves leucine residues from the N-terminus of peptides. Also, has some activity towards tryptophan and methionine and has very low activity towards alanine, arginine, asparagine, phenylalanine and tyrosine. No activity towards histidine, serine, valine, isoleucine, glycine, aspartic acid and glutamic acid. In addition, cleaves the Cys-Gly dipeptide, probably as part of the glutathione regulation pathway; cleavage only occurs in the presence of Mn(2+). Plays a role in the final step of host hemoglobin catabolism, by cleaving hemoglobin-derived oligopeptides providing a source of amino acids for the parasite protein synthesis and for the maintenance of osmotic homeostasis. This Plasmodium vivax (strain Salvador I) protein is Leucine aminopeptidase.